Here is a 388-residue protein sequence, read N- to C-terminus: Dual-specificity RNA methyltransferase RlmN (388 aa).

Catalysis depends on glutamate 109, which acts as the Proton acceptor. Residues 115 to 354 (EDDRATLCVS…TIVRKTRGDD (240 aa)) form the Radical SAM core domain. Cysteine 122 and cysteine 359 are joined by a disulfide. 3 residues coordinate [4Fe-4S] cluster: cysteine 129, cysteine 133, and cysteine 136. Residues 183 to 184 (GE), serine 215, 237 to 239 (SLH), and asparagine 316 contribute to the S-adenosyl-L-methionine site. Catalysis depends on cysteine 359, which acts as the S-methylcysteine intermediate.

It belongs to the radical SAM superfamily. RlmN family. [4Fe-4S] cluster is required as a cofactor.

The protein resides in the cytoplasm. It carries out the reaction adenosine(2503) in 23S rRNA + 2 reduced [2Fe-2S]-[ferredoxin] + 2 S-adenosyl-L-methionine = 2-methyladenosine(2503) in 23S rRNA + 5'-deoxyadenosine + L-methionine + 2 oxidized [2Fe-2S]-[ferredoxin] + S-adenosyl-L-homocysteine. The enzyme catalyses adenosine(37) in tRNA + 2 reduced [2Fe-2S]-[ferredoxin] + 2 S-adenosyl-L-methionine = 2-methyladenosine(37) in tRNA + 5'-deoxyadenosine + L-methionine + 2 oxidized [2Fe-2S]-[ferredoxin] + S-adenosyl-L-homocysteine. Specifically methylates position 2 of adenine 2503 in 23S rRNA and position 2 of adenine 37 in tRNAs. m2A2503 modification seems to play a crucial role in the proofreading step occurring at the peptidyl transferase center and thus would serve to optimize ribosomal fidelity. The sequence is that of Dual-specificity RNA methyltransferase RlmN from Salmonella arizonae (strain ATCC BAA-731 / CDC346-86 / RSK2980).